The following is a 196-amino-acid chain: Cytochrome c biogenesis ATP-binding export protein CcmA (196 aa).

The ABC transporter domain occupies 2 to 195 (LSFHQLKFNI…HIKSAQILQL (194 aa)). 34–41 (GANGCGKT) lines the ATP pocket.

Belongs to the ABC transporter superfamily. CcmA exporter (TC 3.A.1.107) family. As to quaternary structure, the complex is composed of two ATP-binding proteins (CcmA) and two transmembrane proteins (CcmB).

It localises to the cell inner membrane. It catalyses the reaction heme b(in) + ATP + H2O = heme b(out) + ADP + phosphate + H(+). Functionally, part of the ABC transporter complex CcmAB involved in the biogenesis of c-type cytochromes; once thought to export heme, this seems not to be the case, but its exact role is uncertain. Responsible for energy coupling to the transport system. The sequence is that of Cytochrome c biogenesis ATP-binding export protein CcmA from Rickettsia bellii (strain RML369-C).